The primary structure comprises 259 residues: Cytochrome c oxidase subunit 3 (259 aa).

A run of 7 helical transmembrane segments spans residues proline 13–phenylalanine 33, histidine 36–tryptophan 56, glycine 80–phenylalanine 100, phenylalanine 125–alanine 145, histidine 154–leucine 174, phenylalanine 195–isoleucine 215, and alanine 237–tryptophan 257.

This sequence belongs to the cytochrome c oxidase subunit 3 family. In terms of assembly, component of the cytochrome c oxidase (complex IV, CIV), a multisubunit enzyme composed of a catalytic core of 3 subunits and several supernumerary subunits. The complex exists as a monomer or a dimer and forms supercomplexes (SCs) in the inner mitochondrial membrane with ubiquinol-cytochrome c oxidoreductase (cytochrome b-c1 complex, complex III, CIII).

The protein localises to the mitochondrion inner membrane. It carries out the reaction 4 Fe(II)-[cytochrome c] + O2 + 8 H(+)(in) = 4 Fe(III)-[cytochrome c] + 2 H2O + 4 H(+)(out). Component of the cytochrome c oxidase, the last enzyme in the mitochondrial electron transport chain which drives oxidative phosphorylation. The respiratory chain contains 3 multisubunit complexes succinate dehydrogenase (complex II, CII), ubiquinol-cytochrome c oxidoreductase (cytochrome b-c1 complex, complex III, CIII) and cytochrome c oxidase (complex IV, CIV), that cooperate to transfer electrons derived from NADH and succinate to molecular oxygen, creating an electrochemical gradient over the inner membrane that drives transmembrane transport and the ATP synthase. Cytochrome c oxidase is the component of the respiratory chain that catalyzes the reduction of oxygen to water. Electrons originating from reduced cytochrome c in the intermembrane space (IMS) are transferred via the dinuclear copper A center (CU(A)) of subunit 2 and heme A of subunit 1 to the active site in subunit 1, a binuclear center (BNC) formed by heme A3 and copper B (CU(B)). The BNC reduces molecular oxygen to 2 water molecules using 4 electrons from cytochrome c in the IMS and 4 protons from the mitochondrial matrix. The polypeptide is Cytochrome c oxidase subunit 3 (COIII) (Heterololigo bleekeri (Spear squid)).